The chain runs to 357 residues: DNA replication and repair protein RecF (357 aa).

Residue 30–37 (GANGSGKT) coordinates ATP.

It belongs to the RecF family.

It is found in the cytoplasm. In terms of biological role, the RecF protein is involved in DNA metabolism; it is required for DNA replication and normal SOS inducibility. RecF binds preferentially to single-stranded, linear DNA. It also seems to bind ATP. This is DNA replication and repair protein RecF from Salmonella heidelberg (strain SL476).